An 816-amino-acid polypeptide reads, in one-letter code: Leucine--tRNA ligase (816 aa).

A 'HIGH' region motif is present at residues 42 to 52 (PYPSGSLHMGH). A 'KMSKS' region motif is present at residues 574–578 (KMSKS). An ATP-binding site is contributed by Lys-577.

Belongs to the class-I aminoacyl-tRNA synthetase family.

It localises to the cytoplasm. The enzyme catalyses tRNA(Leu) + L-leucine + ATP = L-leucyl-tRNA(Leu) + AMP + diphosphate. This Ruthia magnifica subsp. Calyptogena magnifica protein is Leucine--tRNA ligase.